The chain runs to 215 residues: Chymomexicain (215 aa).

Disulfide bonds link C22/C63, C56/C96, and C154/C201. The active site involves C25. Active-site residues include H160 and N176.

Belongs to the peptidase C1 family.

Functionally, cysteine protease. The chain is Chymomexicain from Jacaratia mexicana (Wild papaya).